The following is a 213-amino-acid chain: Large ribosomal subunit protein uL1 (213 aa).

It belongs to the universal ribosomal protein uL1 family. Part of the 50S ribosomal subunit.

Probably involved in E site tRNA release. Binds directly to 23S rRNA. In terms of biological role, protein L1 is also a translational repressor protein, it controls the translation of the L1 operon by binding to its mRNA. Thus it also controls transcription of L10 and L12 by translational coupling. Unlike the case in E.coli, where the site is in the untranslated mRNA leader, this site is within the L1 protein's structural gene. The polypeptide is Large ribosomal subunit protein uL1 (Methanococcus vannielii (strain ATCC 35089 / DSM 1224 / JCM 13029 / OCM 148 / SB)).